The primary structure comprises 418 residues: MMKKTITLLTALLPLASAVAEEPTLSPEMVSASEVISTQENQTYTYVRCWYRTSYSKDDPATDWEWAKNEDGSYFTIDGYWWSSVSFKNMFYTNTSQNVIRQRCEATLDLANENADITFFAADNRFSYNHTIWSNDAAMQPDQINKVVALGDSLSDTGNIFNASQWRFPNPNSWFLGHFSNGFVWTEYIAKAKNLPLYNWAVGGAAGENQYIALTGVGEQVSSYLTYAKLAKNYKPANTLFTLEFGLNDFMNYNRGVPEVKADYAEALIRLTDAGAKNFMLMTLPDATKAPQFKYSTQEEIDKIRAKVLEMNEFIKAQAMYYKAQGYNITLFDTHALFETLTSAPEEHGFVNASDPCLDINRSSSVDYMYTHALRSECAASGAEKFVFWDVTHPTTATHRYVAEKMLESSNNLAEYRF.

The signal sequence occupies residues 1-19 (MMKKTITLLTALLPLASAV). Serine 153 functions as the Nucleophile in the catalytic mechanism. Active-site residues include aspartate 390 and histidine 393.

It belongs to the 'GDSL' lipolytic enzyme family. In terms of processing, there are two forms of LDH. The LDH(S) may be a protein in which 13 residues of the N-terminal of LDH(L) are deleted.

Its subcellular location is the secreted. In terms of biological role, phospholipase hydrolyzing both fatty acid esters of phospholipid, i.e. it hydrolyzes phosphatidylcholine (PC) to lysophosphatidylcholine (LPC) and then LPC to glycerophosphorylcholine (GPC). This chain is Thermolabile hemolysin, found in Vibrio parahaemolyticus serotype O3:K6 (strain RIMD 2210633).